Consider the following 852-residue polypeptide: Replication factor C small subunit (852 aa).

In terms of domain architecture, DOD-type homing endonuclease spans 183–306; it reads WLGYFMGSGY…IAYALASFGI (124 aa).

The protein belongs to the activator 1 small subunits family. RfcS subfamily. Heteromultimer composed of three to four small subunits (RfcS) and one to two large subunits (RfcL). In terms of processing, this protein undergoes a protein self splicing that involves a post-translational excision of the intervening region (intein) followed by peptide ligation.

Functionally, part of the RFC clamp loader complex which loads the PCNA sliding clamp onto DNA. The complex possesses DNA-dependent ATPase activity which is further stimulated by PCNA. The polypeptide is Replication factor C small subunit (rfcS) (Pyrococcus furiosus (strain ATCC 43587 / DSM 3638 / JCM 8422 / Vc1)).